We begin with the raw amino-acid sequence, 221 residues long: ATP phosphoribosyltransferase (221 aa).

This sequence belongs to the ATP phosphoribosyltransferase family. Short subfamily. As to quaternary structure, heteromultimer composed of HisG and HisZ subunits.

It localises to the cytoplasm. It catalyses the reaction 1-(5-phospho-beta-D-ribosyl)-ATP + diphosphate = 5-phospho-alpha-D-ribose 1-diphosphate + ATP. It participates in amino-acid biosynthesis; L-histidine biosynthesis; L-histidine from 5-phospho-alpha-D-ribose 1-diphosphate: step 1/9. Its function is as follows. Catalyzes the condensation of ATP and 5-phosphoribose 1-diphosphate to form N'-(5'-phosphoribosyl)-ATP (PR-ATP). Has a crucial role in the pathway because the rate of histidine biosynthesis seems to be controlled primarily by regulation of HisG enzymatic activity. The protein is ATP phosphoribosyltransferase of Anaeromyxobacter dehalogenans (strain 2CP-C).